Here is a 141-residue protein sequence, read N- to C-terminus: Cystatin (141 aa).

The first 26 residues, 1–26 (MLHSQLPVAAPLRLLCALLLLPSVTM), serve as a signal peptide directing secretion. The Cystatin domain maps to 29–129 (GGLSPRSVTD…CRFQVWSRPW (101 aa)). The Secondary area of contact signature appears at 73-77 (QVVTG). Cystine bridges form between cysteine 91-cysteine 107 and cysteine 120-cysteine 140.

It belongs to the cystatin family. In terms of tissue distribution, expressed at a low level by the venom gland (at protein level).

Its subcellular location is the secreted. Functionally, inhibits various C1 cysteine proteases including cathepsin L, papain and cathepsin B. This protein has no toxic activity and its function in the venom is unknown. It may play a role as a housekeeping or regulatory protein. The chain is Cystatin from Hoplocephalus stephensii (Stephens's banded snake).